A 476-amino-acid chain; its full sequence is Ribulose bisphosphate carboxylase large chain (476 aa).

Positions Met-1–Ser-2 are excised as a propeptide. The residue at position 3 (Pro-3) is an N-acetylproline. Position 14 is an N6,N6,N6-trimethyllysine (Lys-14). Substrate contacts are provided by Asn-123 and Thr-173. Catalysis depends on Lys-175, which acts as the Proton acceptor. Lys-177 is a substrate binding site. 3 residues coordinate Mg(2+): Lys-201, Asp-203, and Glu-204. Position 201 is an N6-carboxylysine (Lys-201). His-294 functions as the Proton acceptor in the catalytic mechanism. Positions 295, 327, and 379 each coordinate substrate.

Belongs to the RuBisCO large chain family. Type I subfamily. In terms of assembly, heterohexadecamer of 8 large chains and 8 small chains; disulfide-linked. The disulfide link is formed within the large subunit homodimers. Mg(2+) serves as cofactor. In terms of processing, the disulfide bond which can form in the large chain dimeric partners within the hexadecamer appears to be associated with oxidative stress and protein turnover.

It is found in the plastid. The protein localises to the chloroplast. The catalysed reaction is 2 (2R)-3-phosphoglycerate + 2 H(+) = D-ribulose 1,5-bisphosphate + CO2 + H2O. The enzyme catalyses D-ribulose 1,5-bisphosphate + O2 = 2-phosphoglycolate + (2R)-3-phosphoglycerate + 2 H(+). Its function is as follows. RuBisCO catalyzes two reactions: the carboxylation of D-ribulose 1,5-bisphosphate, the primary event in carbon dioxide fixation, as well as the oxidative fragmentation of the pentose substrate in the photorespiration process. Both reactions occur simultaneously and in competition at the same active site. The polypeptide is Ribulose bisphosphate carboxylase large chain (Brachypodium distachyon (Purple false brome)).